The sequence spans 286 residues: 4-hydroxybenzoate octaprenyltransferase (286 aa).

7 helical membrane passes run 21–40 (GTLL…AGGM), 96–116 (LFVI…GLVV), 142–162 (FLGV…TGEV), 167–187 (WWLF…YAMV), 210–230 (QIIG…GWSA), 235–255 (LYGL…MLIF), and 266–286 (FLNN…DYLF).

The protein belongs to the UbiA prenyltransferase family. The cofactor is Mg(2+).

The protein localises to the cell inner membrane. The enzyme catalyses all-trans-octaprenyl diphosphate + 4-hydroxybenzoate = 4-hydroxy-3-(all-trans-octaprenyl)benzoate + diphosphate. Its pathway is cofactor biosynthesis; ubiquinone biosynthesis. In terms of biological role, catalyzes the prenylation of para-hydroxybenzoate (PHB) with an all-trans polyprenyl group. Mediates the second step in the final reaction sequence of ubiquinone-8 (UQ-8) biosynthesis, which is the condensation of the polyisoprenoid side chain with PHB, generating the first membrane-bound Q intermediate 3-octaprenyl-4-hydroxybenzoate. This is 4-hydroxybenzoate octaprenyltransferase from Shewanella sp. (strain ANA-3).